Reading from the N-terminus, the 1023-residue chain is Probable histidine kinase 3 (1023 aa).

The Cytoplasmic portion of the chain corresponds to 1–80 (MDEMSCGGGG…RGWRVVRETW (80 aa)). A helical transmembrane segment spans residues 81-101 (WWVLLLWILAGSLGSFYLFLF). Residues 102–387 (MNAQSLDKRR…CRFEKKPPWP (286 aa)) lie on the Extracellular side of the membrane. Residues 151–352 (TPSAIDQMTF…TNESPISMYG (202 aa)) enclose the CHASE domain. Residues 388-408 (WLAITSSFGTLVIALLTGHIF) form a helical membrane-spanning segment. The Cytoplasmic segment spans residues 409–1023 (QATVHRIAKV…RFFQNHDQVE (615 aa)). The Histidine kinase domain occupies 445 to 715 (TVSHEIRTPM…TFTFTAVLMR (271 aa)). His-448 is subject to Phosphohistidine; by autocatalysis. 2 Response regulatory domains span residues 732–854 (NALV…RRAL) and 880–1016 (QIIV…ARFF). Asp-783 carries the 4-aspartylphosphate modification. The interval 812–831 (LFLLGSSASSPKGGSDTSRE) is disordered. A compositionally biased stretch (polar residues) spans 817–827 (SSASSPKGGSD). 4-aspartylphosphate is present on Asp-930.

Post-translationally, activation probably requires a transfer of a phosphate group between a His in the transmitter domain and an Asp of the receiver domain. In terms of tissue distribution, highly expressed in young leaves and at lower levels in roots, mature leaves, stems and spikelets.

It is found in the cell membrane. The enzyme catalyses ATP + protein L-histidine = ADP + protein N-phospho-L-histidine.. Its function is as follows. Cytokinin receptor related to bacterial two-component regulators. Functions as a histidine kinase and transmits the stress signal to a downstream MAPK cascade. This chain is Probable histidine kinase 3, found in Oryza sativa subsp. japonica (Rice).